A 134-amino-acid chain; its full sequence is uncharacterized protein (134 aa).

A signal peptide spans 1–16 (MAKAVALLLAAIAASA).

This is an uncharacterized protein from Oryza sativa subsp. indica (Rice).